A 226-amino-acid chain; its full sequence is Probable transcriptional regulator RABBIT EARS (226 aa).

The segment at 55–77 adopts a C2H2-type zinc-finger fold; the sequence is YSCSFCGREFKSAQALGGHMNVH. Residues 80 to 102 are disordered; the sequence is DRARLKQQSLSPSSTDQATPPEC. Residues 85-97 show a composition bias toward polar residues; sequence KQQSLSPSSTDQA. The short motif at 212 to 216 is the EAR-like (transcriptional repression) element; sequence LDLEL.

As to expression, strongly expressed in inflorescences and flowers, and weakly in siliques, seedlings and roots. In flowers, it is expressed in petal primordia and their precursor cells. Also expressed in the lateral root caps and the basal cells of lateral roots.

It localises to the nucleus. Probable transcriptional regulator essential for petal development. Required for the early development of the organ primordia of the second whorl. Acts downstream of AP1 and PTL. This is Probable transcriptional regulator RABBIT EARS (RBE) from Arabidopsis thaliana (Mouse-ear cress).